Consider the following 304-residue polypeptide: Porphobilinogen deaminase (304 aa).

Residue Cys-240 is modified to S-(dipyrrolylmethanemethyl)cysteine.

The protein belongs to the HMBS family. Monomer. Requires dipyrromethane as cofactor.

It carries out the reaction 4 porphobilinogen + H2O = hydroxymethylbilane + 4 NH4(+). Its pathway is porphyrin-containing compound metabolism; protoporphyrin-IX biosynthesis; coproporphyrinogen-III from 5-aminolevulinate: step 2/4. Its function is as follows. Tetrapolymerization of the monopyrrole PBG into the hydroxymethylbilane pre-uroporphyrinogen in several discrete steps. The sequence is that of Porphobilinogen deaminase from Xanthomonas axonopodis pv. citri (strain 306).